The sequence spans 315 residues: MKLKMLLLSSTPPGSPGGQTDPDTSSKTPTTTTAATDTSPRRQSINKQSQQTETKRRGYGRRPSSRTRRPQTHQRRSRSRSRSRSSSQTHSSTTTTTTTYRSRSTSLNKTRARSRSRSTSRSTSTTSRRGGRGSSTRQRSRSPSTYTSKRSREGNTRGRGRGRQGRAGSSGGREQRRRRRSFSTSPDSSKRVRRESPKYRGVSPSEVGKQLRSVGAKHSGRLGRLLEEARDPPVILVRGDANTLKCFRNRARNKYRGLFRSFSTTFSWVAGDSIERLGRSRMLISFSCLTQRRDFDDAVKYPKGVEWSYGSLDSL.

Residues 1–215 (MKLKMLLLSS…EVGKQLRSVG (215 aa)) form a disordered region. Residues 20 to 38 (TDPDTSSKTPTTTTAATDT) show a composition bias toward low complexity. A compositionally biased stretch (polar residues) spans 41–52 (RRQSINKQSQQT). Over residues 57–83 (RGYGRRPSSRTRRPQTHQRRSRSRSRS) the composition is skewed to basic residues. Composition is skewed to low complexity over residues 84-106 (RSSSQTHSSTTTTTTTYRSRSTS) and 119-148 (TSRSTSTTSRRGGRGSSTRQRSRSPSTYTS). Over residues 188 to 198 (SSKRVRRESPK) the composition is skewed to basic and acidic residues.

It belongs to the papillomaviridae E8^E2C protein family.

It localises to the host nucleus. Plays a role in limiting the replication of viral DNA in keratinocytes. Recruits the host NCoR/SMRT complex to viral replication foci to mediate repression of both viral replication and transcription. The protein is Protein E8^E2C of Human papillomavirus 47.